A 169-amino-acid chain; its full sequence is FAM231A/C-like protein LOC102723383 (169 aa).

The segment at 82 to 140 (LIRSGSSQNESQEDQGAGLISQAGLKADNRRESSTWANEVEDRRPQCTPALNLTPSHPH) is disordered.

Belongs to the FAM231 family.

This Homo sapiens (Human) protein is FAM231A/C-like protein LOC102723383.